Here is a 311-residue protein sequence, read N- to C-terminus: Succinate dehydrogenase [ubiquinone] iron-sulfur subunit 2, mitochondrial (311 aa).

The N-terminal 63 residues, 1-63, are a transit peptide targeting the mitochondrion; sequence MILRRTLPRL…EEIRDHRRGD (63 aa). The disordered stretch occupies residues 1–70; that stretch reads MILRRTLPRL…RGDAAAASPA (70 aa). Positions 51–63 are enriched in basic and acidic residues; it reads AKEEEIRDHRRGD. Positions 77 to 168 constitute a 2Fe-2S ferredoxin-type domain; that stretch reads FRVYRWSPDA…ATTVTPLPHM (92 aa). Positions 128, 133, and 148 each coordinate [2Fe-2S] cluster. In terms of domain architecture, 4Fe-4S ferredoxin-type spans 211–241; sequence ERKRLDGLYECILCACCSAACPSYWWNAEAF. Residues C221, C224, and C227 each coordinate [4Fe-4S] cluster. Residue C231 participates in [3Fe-4S] cluster binding. A ubiquinone is bound at residue W236. Residues C279 and C285 each coordinate [3Fe-4S] cluster. [4Fe-4S] cluster is bound at residue C289.

The protein belongs to the succinate dehydrogenase/fumarate reductase iron-sulfur protein family. In terms of assembly, component of complex II composed of eight subunits in plants: four classical SDH subunits SDH1, SDH2, SDH3 and SDH4 (a flavoprotein (FP), an iron-sulfur protein (IP), and a cytochrome b composed of a large and a small subunit.), as well as four subunits unknown in mitochondria from bacteria and heterotrophic eukaryotes. The cofactor is [2Fe-2S] cluster. It depends on [3Fe-4S] cluster as a cofactor. Requires [4Fe-4S] cluster as cofactor.

It is found in the mitochondrion inner membrane. It carries out the reaction a quinone + succinate = fumarate + a quinol. It functions in the pathway carbohydrate metabolism; tricarboxylic acid cycle; fumarate from succinate (eukaryal route): step 1/1. Its function is as follows. Iron-sulfur protein (IP) subunit of succinate dehydrogenase (SDH) that is involved in complex II of the mitochondrial electron transport chain and is responsible for transferring electrons from succinate to ubiquinone (coenzyme Q). The sequence is that of Succinate dehydrogenase [ubiquinone] iron-sulfur subunit 2, mitochondrial from Oryza sativa subsp. japonica (Rice).